The sequence spans 316 residues: Aspartate carbamoyltransferase catalytic subunit (316 aa).

Arg58 and Thr59 together coordinate carbamoyl phosphate. Lys86 is a binding site for L-aspartate. Carbamoyl phosphate is bound by residues Arg108, His136, and Gln139. L-aspartate contacts are provided by Arg169 and Arg223. Gly264 and Pro265 together coordinate carbamoyl phosphate.

It belongs to the aspartate/ornithine carbamoyltransferase superfamily. ATCase family. In terms of assembly, heterododecamer (2C3:3R2) of six catalytic PyrB chains organized as two trimers (C3), and six regulatory PyrI chains organized as three dimers (R2).

It carries out the reaction carbamoyl phosphate + L-aspartate = N-carbamoyl-L-aspartate + phosphate + H(+). The protein operates within pyrimidine metabolism; UMP biosynthesis via de novo pathway; (S)-dihydroorotate from bicarbonate: step 2/3. Catalyzes the condensation of carbamoyl phosphate and aspartate to form carbamoyl aspartate and inorganic phosphate, the committed step in the de novo pyrimidine nucleotide biosynthesis pathway. The polypeptide is Aspartate carbamoyltransferase catalytic subunit (Granulibacter bethesdensis (strain ATCC BAA-1260 / CGDNIH1)).